A 350-amino-acid chain; its full sequence is Cephaeline 6'-O-methyltransferase IpeOMT1 (350 aa).

Gly-193, Asp-216, Asp-236, Met-237, and Lys-250 together coordinate S-adenosyl-L-methionine. His-254 (proton acceptor) is an active-site residue.

Belongs to the class I-like SAM-binding methyltransferase superfamily. Cation-independent O-methyltransferase family. As to expression, expressed in roots.

It is found in the cytoplasm. The protein localises to the cytosol. It catalyses the reaction cephaeline + S-adenosyl-L-methionine = emetine + S-adenosyl-L-homocysteine + H(+). The catalysed reaction is deacetylisoipecoside + S-adenosyl-L-methionine = 6-O-methyldeacetylisoipecoside + S-adenosyl-L-homocysteine + H(+). The enzyme catalyses 7-O-methyldeacetylisoipecoside + S-adenosyl-L-methionine = 6,7-O,O-dimethyldeacetylisoipecoside + S-adenosyl-L-homocysteine + H(+). It carries out the reaction norcoclaurine + S-adenosyl-L-methionine = coclaurine + S-adenosyl-L-homocysteine + H(+). It catalyses the reaction (S)-norprotosinomenine + S-adenosyl-L-methionine = (S)-6-O-methylnorprotosinomenine + S-adenosyl-L-homocysteine + H(+). The catalysed reaction is (R)-norprotosinomenine + S-adenosyl-L-methionine = (R)-6-O-methylnorprotosinomenine + S-adenosyl-L-homocysteine + H(+). It participates in alkaloid biosynthesis. Functionally, O-methyltransferase involved in the biosynthesis of ipecac and benzylisoquinoline monoterpenoid-isoquinoline alkaloids natural products, starting by the condensation of dopamine and secologanin, and including emetine and cephaeline, drugs used both as anti-protozoal (e.g. treatment of ameobiasis) and as emetic agents. Mediates cephaeline 6'-O-methylation to produce emetine. Catalyzes the 6-O-methylation of N-deacetylisoipecoside, 7-O-methyl-N-deacetylisoipecoside, isococlaurine, norcoclaurine, (S)-norprotosinomenine and (R)-norprotosinomenine, and, with a lower efficiency, of 4'-O-methyllaudanosoline, isoorientaline and protosinomenine. Supports also the 4'-O-methylation of nororientaline. This Carapichea ipecacuanha (Ipecac) protein is Cephaeline 6'-O-methyltransferase IpeOMT1.